The following is a 345-amino-acid chain: UDP-3-O-acylglucosamine N-acyltransferase (345 aa).

His-253 serves as the catalytic Proton acceptor.

The protein belongs to the transferase hexapeptide repeat family. LpxD subfamily. Homotrimer.

The catalysed reaction is a UDP-3-O-[(3R)-3-hydroxyacyl]-alpha-D-glucosamine + a (3R)-hydroxyacyl-[ACP] = a UDP-2-N,3-O-bis[(3R)-3-hydroxyacyl]-alpha-D-glucosamine + holo-[ACP] + H(+). The protein operates within bacterial outer membrane biogenesis; LPS lipid A biosynthesis. Catalyzes the N-acylation of UDP-3-O-acylglucosamine using 3-hydroxyacyl-ACP as the acyl donor. Is involved in the biosynthesis of lipid A, a phosphorylated glycolipid that anchors the lipopolysaccharide to the outer membrane of the cell. This chain is UDP-3-O-acylglucosamine N-acyltransferase, found in Rickettsia massiliae (strain Mtu5).